The chain runs to 493 residues: 3-ketoacyl-CoA synthase 16 (493 aa).

The N-terminal stretch at 1–35 (MDYPMKKVKIFFNYLMAHRFKLCFLPLMVAIAVEA) is a signal peptide. A helical transmembrane segment spans residues 52-74 (NNHTSLTMFFLYLALGSTLYLMT). An FAE domain is found at 71-366 (YLMTRPKPVY…FFVRFVKKKF (296 aa)). Residues Cys221, His300, His384, His388, His417, and Asn421 contribute to the active site.

This sequence belongs to the thiolase-like superfamily. Chalcone/stilbene synthases family. As to expression, expressed in siliques.

Its subcellular location is the membrane. The enzyme catalyses a very-long-chain acyl-CoA + malonyl-CoA + H(+) = a very-long-chain 3-oxoacyl-CoA + CO2 + CoA. It participates in lipid metabolism; fatty acid biosynthesis. This chain is 3-ketoacyl-CoA synthase 16, found in Arabidopsis thaliana (Mouse-ear cress).